The following is a 269-amino-acid chain: Phosphate import ATP-binding protein PstB 1 (269 aa).

The 240-residue stretch at 16–255 (FTTQNLDIYY…DRTGKVFGDP (240 aa)) folds into the ABC transporter domain. 48-55 (GPSGCGKS) lines the ATP pocket.

The protein belongs to the ABC transporter superfamily. Phosphate importer (TC 3.A.1.7) family. The complex is composed of two ATP-binding proteins (PstB), two transmembrane proteins (PstC and PstA) and a solute-binding protein (PstS).

The protein localises to the cell inner membrane. The enzyme catalyses phosphate(out) + ATP + H2O = ADP + 2 phosphate(in) + H(+). Its function is as follows. Part of the ABC transporter complex PstSACB involved in phosphate import. Responsible for energy coupling to the transport system. This chain is Phosphate import ATP-binding protein PstB 1, found in Synechocystis sp. (strain ATCC 27184 / PCC 6803 / Kazusa).